Consider the following 553-residue polypeptide: MRSDTITQGFERTPHRALLKGSGVPQSQMDKPFIGVATSFTDLIPGHVGMRDLERFIEKGVHTGGGHAFFFGLPGVCDGIAMGHKGMHYSLPTRELIADMVESVAEAHRLDGLVLLTNCDKITPGMLMAAARLDIPCIVVTAGPMMSGRGQEGRKFSFVTDTFEAMARYKAGVISERELMVCEENACPGIGSCQGLFTANTMAILTETMGMSLPRCGTALAVSALKRRIAFASGEKIVELVQNNITPRSILTREAFENAIRVDLALGGSSNTVLHLLAIANEAGVELPLETFDILAKETPQLASMNPAGEHFMEDLDVAGGVSGVMKQLGDKIKDTQTLFGLTTRQLAASVENVDETVIRPLTNPVKKEGGIAVLFGNIAPKGAVVKQSGVSDKMMKFEGTARCFDSEELAMAALMEGEIVAGNVVVIRYEGPKGGPGMREMLAPTAALMGLGLGDSVALITDGRFSGGTRGPCIGHISPEAAQGGPIGLIQDGDRISLDIPARRLELLVDEAVLQARAATWVAPPPKIAKGWLARYAKVVTSAHTGAVTTAE.

Residue D78 coordinates Mg(2+). A [2Fe-2S] cluster-binding site is contributed by C119. The Mg(2+) site is built by D120 and K121. K121 carries the post-translational modification N6-carboxylysine. C193 is a binding site for [2Fe-2S] cluster. E441 provides a ligand contact to Mg(2+). S467 acts as the Proton acceptor in catalysis.

It belongs to the IlvD/Edd family. As to quaternary structure, homodimer. [2Fe-2S] cluster is required as a cofactor. It depends on Mg(2+) as a cofactor.

The catalysed reaction is (2R)-2,3-dihydroxy-3-methylbutanoate = 3-methyl-2-oxobutanoate + H2O. It carries out the reaction (2R,3R)-2,3-dihydroxy-3-methylpentanoate = (S)-3-methyl-2-oxopentanoate + H2O. It participates in amino-acid biosynthesis; L-isoleucine biosynthesis; L-isoleucine from 2-oxobutanoate: step 3/4. It functions in the pathway amino-acid biosynthesis; L-valine biosynthesis; L-valine from pyruvate: step 3/4. In terms of biological role, functions in the biosynthesis of branched-chain amino acids. Catalyzes the dehydration of (2R,3R)-2,3-dihydroxy-3-methylpentanoate (2,3-dihydroxy-3-methylvalerate) into 2-oxo-3-methylpentanoate (2-oxo-3-methylvalerate) and of (2R)-2,3-dihydroxy-3-methylbutanoate (2,3-dihydroxyisovalerate) into 2-oxo-3-methylbutanoate (2-oxoisovalerate), the penultimate precursor to L-isoleucine and L-valine, respectively. The chain is Dihydroxy-acid dehydratase from Pelobacter propionicus (strain DSM 2379 / NBRC 103807 / OttBd1).